A 198-amino-acid polypeptide reads, in one-letter code: Glycerol-3-phosphate acyltransferase (198 aa).

6 helical membrane-spanning segments follow: residues 5 to 25 (YLII…SIAI), 55 to 75 (VGLA…YLGF), 79 to 99 (GSLG…LPVL), 114 to 134 (VLLF…LIVV), 139 to 159 (YVSL…LIYI), and 164 to 184 (YIGL…RSNI).

It belongs to the PlsY family. In terms of assembly, probably interacts with PlsX.

Its subcellular location is the cell membrane. The enzyme catalyses an acyl phosphate + sn-glycerol 3-phosphate = a 1-acyl-sn-glycero-3-phosphate + phosphate. It participates in lipid metabolism; phospholipid metabolism. Catalyzes the transfer of an acyl group from acyl-phosphate (acyl-PO(4)) to glycerol-3-phosphate (G3P) to form lysophosphatidic acid (LPA). This enzyme utilizes acyl-phosphate as fatty acyl donor, but not acyl-CoA or acyl-ACP. The polypeptide is Glycerol-3-phosphate acyltransferase (Finegoldia magna (strain ATCC 29328 / DSM 20472 / WAL 2508) (Peptostreptococcus magnus)).